The following is a 218-amino-acid chain: N-(5'-phosphoribosyl)anthranilate isomerase (218 aa).

The protein belongs to the TrpF family.

It catalyses the reaction N-(5-phospho-beta-D-ribosyl)anthranilate = 1-(2-carboxyphenylamino)-1-deoxy-D-ribulose 5-phosphate. It functions in the pathway amino-acid biosynthesis; L-tryptophan biosynthesis; L-tryptophan from chorismate: step 3/5. This chain is N-(5'-phosphoribosyl)anthranilate isomerase, found in Halobacterium salinarum (strain ATCC 29341 / DSM 671 / R1).